We begin with the raw amino-acid sequence, 582 residues long: Inositol transporter 4 (582 aa).

A run of 12 helical transmembrane segments spans residues 35-55 (GIGG…LLFI), 70-90 (STIV…GGWI), 105-125 (VLFL…VIIV), 128-148 (IFVG…ISEA), 162-182 (GLLI…FVHT), 188-208 (WMLG…LSLP), 290-310 (FVGI…AGYA), 317-337 (ALSL…MMFV), 345-365 (LMII…TVFS), 456-476 (FGFL…PGMG), 494-514 (LGGG…SESF), and 525-545 (GTFL…WLLV).

The protein belongs to the major facilitator superfamily. Sugar transporter (TC 2.A.1.1) family. Highly expressed in pollen and phloem companion cells.

The protein localises to the cell membrane. Plasma membrane inositol-proton symporter. Mediates high-affinity myoinositol-proton symport across the plasma membrane. Active with myoinositol, scylloinositol and D-chiroinositol. Low activity with mucoinositol and alloinositol. The protein is Inositol transporter 4 (INT4) of Arabidopsis thaliana (Mouse-ear cress).